The primary structure comprises 736 residues: Probable methionine--tRNA ligase, cytoplasmic (736 aa).

Positions proline 25–asparagine 35 match the 'HIGH' region motif. The 'KMSKS' region signature appears at lysine 346 to serine 350. Position 349 (lysine 349) interacts with ATP. A tRNA-binding domain is found at proline 573–alanine 680.

Belongs to the class-I aminoacyl-tRNA synthetase family.

It localises to the cytoplasm. The catalysed reaction is tRNA(Met) + L-methionine + ATP = L-methionyl-tRNA(Met) + AMP + diphosphate. The chain is Probable methionine--tRNA ligase, cytoplasmic (metS) from Dictyostelium discoideum (Social amoeba).